The primary structure comprises 75 residues: MRKYLSARSMCCSFFSCAKNCATLGLDSTEGRQFLAVGPQPFASLEGFHGEGGDCLFTTFPPLSIPRRRFCAGHA.

A signal peptide spans 1-18; that stretch reads MRKYLSARSMCCSFFSCA.

This is an uncharacterized protein from Treponema pallidum (strain Nichols).